Consider the following 141-residue polypeptide: Large ribosomal subunit protein uL11 (141 aa).

Belongs to the universal ribosomal protein uL11 family. As to quaternary structure, part of the ribosomal stalk of the 50S ribosomal subunit. Interacts with L10 and the large rRNA to form the base of the stalk. L10 forms an elongated spine to which L12 dimers bind in a sequential fashion forming a multimeric L10(L12)X complex. In terms of processing, one or more lysine residues are methylated.

Its function is as follows. Forms part of the ribosomal stalk which helps the ribosome interact with GTP-bound translation factors. The protein is Large ribosomal subunit protein uL11 of Aster yellows witches'-broom phytoplasma (strain AYWB).